A 314-amino-acid polypeptide reads, in one-letter code: N-alpha-acetyltransferase 80 (314 aa).

Residues 90–243 form the N-acetyltransferase domain; that stretch reads LEPVHCRPEL…TTVLRAFSKP (154 aa). Residues R113 and 118-121 contribute to the substrate site; that span reads RLHS. Residues 169 to 171, 177 to 182, and Q207 each bind acetyl-CoA; these read VVV and GRGFGR. Residues 260–295 form a disordered region; it reads VPRSSKGPPLPPPPPLPQSLTASPPPSPEPLPQSPL. Residues 267–292 are compositionally biased toward pro residues; that stretch reads PPLPPPPPLPQSLTASPPPSPEPLPQ.

The protein belongs to the acetyltransferase family.

It localises to the cytoplasm. The protein resides in the cytosol. The catalysed reaction is N-terminal L-aspartyl-L-aspartyl-L-aspartyl-[protein] + acetyl-CoA = N-terminal N-acetyl-L-aspartyl-L-aspartyl-L-aspartyl-[protein] + CoA + H(+). The enzyme catalyses N-terminal L-glutamyl-L-glutamyl-L-glutamyl-[protein] + acetyl-CoA = N-terminal N-acetyl-L-glutamyl-L-glutamyl-L-glutamyl-[protein] + CoA + H(+). Its function is as follows. N-alpha-acetyltransferase that specifically mediates the acetylation of the acidic amino terminus of processed forms of beta- and gamma-actin (ACTB and ACTG, respectively). N-terminal acetylation of processed beta- and gamma-actin regulates actin filament depolymerization and elongation. In vivo, preferentially displays N-terminal acetyltransferase activity towards acid N-terminal sequences starting with Asp-Asp-Asp and Glu-Glu-Glu. In vitro, shows high activity towards Met-Asp-Glu-Leu and Met-Asp-Asp-Asp. May act as a tumor suppressor. This Mus musculus (Mouse) protein is N-alpha-acetyltransferase 80.